Reading from the N-terminus, the 103-residue chain is MFAVIKTGGKQYSVAADDIITVMTLQGEPGDAVTFDSVLMLAGEGEPKIGAPFIAGATVSGEIVEQTRGPKVISFKKRRRQNSKRKRGHRQDLTLVKITGINA.

The protein belongs to the bacterial ribosomal protein bL21 family. As to quaternary structure, part of the 50S ribosomal subunit. Contacts protein L20.

Its function is as follows. This protein binds to 23S rRNA in the presence of protein L20. This Beijerinckia indica subsp. indica (strain ATCC 9039 / DSM 1715 / NCIMB 8712) protein is Large ribosomal subunit protein bL21.